An 801-amino-acid polypeptide reads, in one-letter code: MTDGLNKAAVFICHCSGNISEHVDIDAVKKTLKAEGISVFDYEYMCSSQGQALIKKKIVEGSLDRVVIGSCTPSKHGTLFKKCIQETGLNRAGLEIANLREQCAWVHPDRTGATEKALSLLRAKLKRLENVEPLDEIKVDIAQQALVIGGGIAGITAALNLADNGVSTVLVENNSSIGGQMAKIGKIFSPDKLAEECAMCSLSPLMNEVAAHPKITLLTRTEVESLSGSAGNFTIRLRKKPRYVKDSCTACGRCSRVCPVQVEDEFNCGHMDKKAISLRFSQSVPKIYCIDPDYCLQLNGEACGKCADACKNEAIDFSQKEEIVELNVGAVVVATGFEEYDVSQKPQYGYGIFENVLTQMELARVLGINGPTKGELLRVSDFSKASSDPTPATCDSRCEDSSDESQGTDTPKRIVMIQCVGSRDEKEGGNRYCSRYCCMAALKHASLIKKKHPETEITICYIDVRAFGFYENYYRAVQETGVNFVRGRPAEVIEKPDKSLVVRVEDTLDQKMRELPADLVVLSAAMVPSPGTRKIASVLNLSQDESGFIKERHSKLKPVDSSLDGIFVCGTAQSPKDVTDTIAQAGLAAVRARAFITDSPKVLDNEIATINQLLCTRCGECLKCPFDALSVNESGRVVLDPLICTGCGYCTKLCGEGAVQIAGFTKLQLKAEMEGVLEEGDVLGFVNSGIASLTCDNIGNSVLTYPSNVKLIKVPTGLVVDRDLVLHAFRHGASSVLFVEDPPDNPRAEVIYPLTVSHFEELKEELGDSGNRIYFKKAYVPNTKGLAGTFTSLAREGEMIR.

Position 149 to 172 (149 to 172 (GGGIAGITAALNLADNGVSTVLVE)) interacts with FAD. 4Fe-4S ferredoxin-type domains lie at 239 to 269 (KKPRYVKDSCTACGRCSRVCPVQVEDEFNCG) and 285 to 320 (PKIYCIDPDYCLQLNGEACGKCADACKNEAIDFSQK). [4Fe-4S] cluster contacts are provided by C248, C251, C254, C258, C295, C303, C306, and C310. Positions 382–409 (FSKASSDPTPATCDSRCEDSSDESQGTD) are disordered. 2 consecutive 4Fe-4S ferredoxin-type domains span residues 606–634 (EIATINQLLCTRCGECLKCPFDALSVNES) and 635–664 (GRVVLDPLICTGCGYCTKLCGEGAVQIAGF). Residues C615, C618, C621, C624, C644, C647, C650, and C654 each contribute to the [4Fe-4S] cluster site.

The protein belongs to the HdrA family. The ferredoxin:CoB-CoM heterodisulfide reductase is composed of three subunits; HdrA1, HdrB1 and HdrC1. [4Fe-4S] cluster serves as cofactor. FAD is required as a cofactor.

The protein resides in the cytoplasm. The enzyme catalyses coenzyme B + coenzyme M + 2 oxidized [2Fe-2S]-[ferredoxin] = coenzyme M-coenzyme B heterodisulfide + 2 reduced [2Fe-2S]-[ferredoxin] + 2 H(+). It functions in the pathway cofactor metabolism; coenzyme M-coenzyme B heterodisulfide reduction; coenzyme B and coenzyme M from coenzyme M-coenzyme B heterodisulfide: step 1/1. Part of a complex that catalyzes the reversible reduction of CoM-S-S-CoB to the thiol-coenzymes H-S-CoM (coenzyme M) and H-S-CoB (coenzyme B). Probably involved in methylotrophic methanogenesis but not in aceticlastic methanogenesis. The polypeptide is Ferredoxin:CoB-CoM heterodisulfide reductase subunit A (Methanosarcina acetivorans (strain ATCC 35395 / DSM 2834 / JCM 12185 / C2A)).